Here is a 476-residue protein sequence, read N- to C-terminus: Serine/threonine-protein kinase PknF (476 aa).

The region spanning 12–279 (FTIVRQLGSG…FARALGHRLG (268 aa)) is the Protein kinase domain. Residues 18 to 26 (LGSGGMGEV) and lysine 41 each bind ATP. Residue aspartate 137 is the Proton acceptor of the active site. The chain crosses the membrane as a helical span at residues 306–326 (TAVIVPAVLAMLLVMAVAVAV). The segment at 332-376 (ADDERAAQPARTRTTTSAGTTTSVAPASTTRPAPTTPTTTGAADT) is disordered. A compositionally biased stretch (low complexity) spans 338 to 376 (AQPARTRTTTSAGTTTSVAPASTTRPAPTTPTTTGAADT).

Belongs to the protein kinase superfamily. Ser/Thr protein kinase family. In terms of processing, autophosphorylated. Dephosphorylated by PstP.

The protein resides in the cell membrane. The enzyme catalyses L-seryl-[protein] + ATP = O-phospho-L-seryl-[protein] + ADP + H(+). The catalysed reaction is L-threonyl-[protein] + ATP = O-phospho-L-threonyl-[protein] + ADP + H(+). Its function is as follows. A serine/threonine-protein kinase, acts on HupB in vitro. The chain is Serine/threonine-protein kinase PknF from Mycobacterium tuberculosis (strain ATCC 25177 / H37Ra).